The primary structure comprises 1217 residues: Genetic suppressor element 1 (1217 aa).

The disordered stretch occupies residues 1–155 (MKGMSHEPKS…SRSSSGGRER (155 aa)). Residue serine 10 is modified to Phosphoserine. Residues 15–33 (MLSTATRTTATVNPLTPSP) show a composition bias toward polar residues. Composition is skewed to low complexity over residues 43-63 (SPAT…FAAA) and 76-89 (GSSL…VSSP). 2 positions are modified to phosphoserine: serine 84 and serine 95. Low complexity predominate over residues 103–114 (VPMGPIIVPPGG). Residue arginine 305 is modified to Asymmetric dimethylarginine. A coiled-coil region spans residues 321–403 (ERMSGLSAER…REKELLAAKA (83 aa)). Disordered regions lie at residues 324-385 (SGLS…EREL) and 418-465 (RGHA…HHTV). Positions 331-385 (LQMDEELRREREREREREREREADREREKEREREREKEREQEKEREREKEREREL) are enriched in basic and acidic residues. Threonine 433 bears the Phosphothreonine mark. The span at 450 to 465 (PVQHPLHPVPTPHHTV) shows a compositional bias: low complexity. At lysine 496 the chain carries N6-acetyllysine. 3 disordered regions span residues 526 to 579 (HLDM…QLHA), 633 to 675 (KAEE…GPFL), and 699 to 720 (FGEL…PRAP). 2 stretches are compositionally biased toward basic and acidic residues: residues 551-561 (NRHEPGGRDPP) and 633-645 (KAEE…EPAP). Over residues 711 to 720 (PYRPPVPRAP) the composition is skewed to pro residues. Lysine 739 is modified (N6-acetyllysine). The residue at position 766 (serine 766) is a Phosphoserine. 4 disordered regions span residues 807–858 (KEEL…NNSP), 903–930 (ADSL…SLDV), 948–981 (EPGK…EAPG), and 1068–1122 (LQSS…PKRK). Residues 813-822 (QKRRKRRRML) are compositionally biased toward basic residues. A phosphoserine mark is found at serine 826 and serine 828. Polar residues-rich tracts occupy residues 831-840 (TIQSKRQTPS) and 847-858 (TRYSPDEMNNSP). Serine 857 carries the post-translational modification Phosphoserine. Threonine 907 bears the Phosphothreonine mark. Residue serine 909 is modified to Phosphoserine. Positions 1068 to 1085 (LQSSSRAPPPQHNGQQEP) are enriched in polar residues. Residues 1099–1117 (RDSEEEEEEDDEDGEDEEE) show a composition bias toward acidic residues. Residue serine 1101 is modified to Phosphoserine. Positions 1127–1201 (EAVFEAYQEH…ELDHLRKCLA (75 aa)) form a coiled coil.

In terms of assembly, may be a component of a BHC histone deacetylase complex that contains HDAC1, HDAC2, HMG20B/BRAF35, KDM1A, RCOR1/CoREST, PHF21A/BHC80, ZMYM2, ZNF217, ZMYM3, GSE1 and GTF2I.

The polypeptide is Genetic suppressor element 1 (GSE1) (Homo sapiens (Human)).